Reading from the N-terminus, the 609-residue chain is uncharacterized protein (609 aa).

It belongs to the NodU/CmcH family.

This is an uncharacterized protein from Methanocaldococcus jannaschii (strain ATCC 43067 / DSM 2661 / JAL-1 / JCM 10045 / NBRC 100440) (Methanococcus jannaschii).